The following is a 123-amino-acid chain: Large ribosomal subunit protein bL12 (123 aa).

The protein belongs to the bacterial ribosomal protein bL12 family. In terms of assembly, homodimer. Part of the ribosomal stalk of the 50S ribosomal subunit. Forms a multimeric L10(L12)X complex, where L10 forms an elongated spine to which 2 to 4 L12 dimers bind in a sequential fashion. Binds GTP-bound translation factors.

Functionally, forms part of the ribosomal stalk which helps the ribosome interact with GTP-bound translation factors. Is thus essential for accurate translation. This Neisseria gonorrhoeae (strain NCCP11945) protein is Large ribosomal subunit protein bL12.